The following is a 199-amino-acid chain: Thymidine kinase (199 aa).

Residues 9–16 and 93–96 contribute to the ATP site; these read GAMSSGKT and DEAQ. Residue E94 is the Proton acceptor of the active site. The Zn(2+) site is built by C151, C154, C188, and H191.

This sequence belongs to the thymidine kinase family. As to quaternary structure, homotetramer.

It is found in the cytoplasm. The catalysed reaction is thymidine + ATP = dTMP + ADP + H(+). In Lactobacillus acidophilus (strain ATCC 700396 / NCK56 / N2 / NCFM), this protein is Thymidine kinase.